The chain runs to 426 residues: Serine--tRNA ligase (426 aa).

231–233 lines the L-serine pocket; sequence TAE. 262-264 is a binding site for ATP; it reads RSE. Residue Glu-285 participates in L-serine binding. 349–352 provides a ligand contact to ATP; it reads EISS. Ser-384 is an L-serine binding site.

This sequence belongs to the class-II aminoacyl-tRNA synthetase family. Type-1 seryl-tRNA synthetase subfamily. As to quaternary structure, homodimer. The tRNA molecule binds across the dimer.

The protein localises to the cytoplasm. It catalyses the reaction tRNA(Ser) + L-serine + ATP = L-seryl-tRNA(Ser) + AMP + diphosphate + H(+). It carries out the reaction tRNA(Sec) + L-serine + ATP = L-seryl-tRNA(Sec) + AMP + diphosphate + H(+). It participates in aminoacyl-tRNA biosynthesis; selenocysteinyl-tRNA(Sec) biosynthesis; L-seryl-tRNA(Sec) from L-serine and tRNA(Sec): step 1/1. Functionally, catalyzes the attachment of serine to tRNA(Ser). Is also able to aminoacylate tRNA(Sec) with serine, to form the misacylated tRNA L-seryl-tRNA(Sec), which will be further converted into selenocysteinyl-tRNA(Sec). This is Serine--tRNA ligase from Laribacter hongkongensis (strain HLHK9).